The primary structure comprises 660 residues: Methionine--tRNA ligase 1 (660 aa).

A 'HIGH' region motif is present at residues 15–25 (YYPSGKLHIGH). Residues 310-314 (KMSKS) carry the 'KMSKS' region motif. K313 is a binding site for ATP. Residues 560–660 (DFFKVELRVA…QNIPNGTKIK (101 aa)) enclose the tRNA-binding domain.

The protein belongs to the class-I aminoacyl-tRNA synthetase family. MetG type 2B subfamily. Homodimer.

The protein localises to the cytoplasm. The catalysed reaction is tRNA(Met) + L-methionine + ATP = L-methionyl-tRNA(Met) + AMP + diphosphate. Its function is as follows. Is required not only for elongation of protein synthesis but also for the initiation of all mRNA translation through initiator tRNA(fMet) aminoacylation. This Bacillus anthracis protein is Methionine--tRNA ligase 1.